The sequence spans 224 residues: Putative ankyrin repeat protein R845 (224 aa).

8 ANK repeats span residues 1–14 (MVEY…DVRS), 15–44 (NYDH…DVSM), 46–74 (YDYI…DPRT), 75–104 (NNDK…DIRI), 105–134 (DNDS…DIRA), 136–164 (NDYS…DVRA), 165–194 (DNDY…DFRA), and 196–224 (NDCA…VCPY).

The sequence is that of Putative ankyrin repeat protein R845 from Acanthamoeba polyphaga mimivirus (APMV).